The chain runs to 521 residues: MIPKIYKKIKWLQSNPLILKKILRGIEREALRTDIHGTIINTAYPQDKIGSALTHKWITTDFSESLLEFITPTNASTNYILKFLNDTHKFVNDNLIQEYFWPFSIPPCKKYMHSIKLSKYGTSNLGQVKTLYRKGLKHRYGILMNIISGVHYNFSLPRIFWNHWKKIHHKNTQYNTTSEGYLCLIRNYYKFGWIIPYLFGASPAVEPLFIKNKKHNYKFKKHHGMLYLPWSTSLRLSDLGHTNQSIKKLKLTFNSLSEYVLALEHGIKTPSKQFKNLGLYDQFGNFKQINTNLLQTENELYTYIRPKQKLKNCESLSAALRNRGIEYVEIRALDINPFTSTGVDKNQILLLDLFLIWCVLADSPKISSQEFHFFLKNWHTIITKGRKPKQKININIYNTKNTIQTIGKTILYDLFYIAEILDSLSNNNNYQETCKNLILYFDYPELTYSEKLLNKFMCYGIYETGANLFVKYKQKLHNDSFKILSKKDLNNEMMKSNNSQKLIEKQDTLNFKEYLNLYYTK.

It belongs to the glutamate--cysteine ligase type 1 family. Type 1 subfamily.

It catalyses the reaction L-cysteine + L-glutamate + ATP = gamma-L-glutamyl-L-cysteine + ADP + phosphate + H(+). It functions in the pathway sulfur metabolism; glutathione biosynthesis; glutathione from L-cysteine and L-glutamate: step 1/2. The polypeptide is Glutamate--cysteine ligase (gshA) (Buchnera aphidicola subsp. Baizongia pistaciae (strain Bp)).